A 169-amino-acid polypeptide reads, in one-letter code: Ribosome maturation factor RimM (169 aa).

In terms of domain architecture, PRC barrel spans 94–168; that stretch reads DDEFYHADLI…RIVADPPEGL (75 aa).

The protein belongs to the RimM family. As to quaternary structure, binds ribosomal protein uS19.

The protein localises to the cytoplasm. An accessory protein needed during the final step in the assembly of 30S ribosomal subunit, possibly for assembly of the head region. Essential for efficient processing of 16S rRNA. May be needed both before and after RbfA during the maturation of 16S rRNA. It has affinity for free ribosomal 30S subunits but not for 70S ribosomes. The chain is Ribosome maturation factor RimM from Cereibacter sphaeroides (strain ATCC 17029 / ATH 2.4.9) (Rhodobacter sphaeroides).